Reading from the N-terminus, the 92-residue chain is U21-hexatoxin-Hi1a (92 aa).

A signal peptide spans 1 to 19 (MKTILSMLIFVALFAAIVG). 4 cysteine pairs are disulfide-bonded: cysteine 41–cysteine 55, cysteine 48–cysteine 67, cysteine 54–cysteine 82, and cysteine 85–cysteine 92.

The protein belongs to the neurotoxin 21 family. As to expression, expressed by the venom gland.

The protein localises to the secreted. Potent insecticidal toxin with probable ion channel impairing activity. In vivo, reversibly paralyzes all flies within 30 minutes, even at low dose (0.3 nmol/g). This chain is U21-hexatoxin-Hi1a, found in Hadronyche infensa (Fraser island funnel-web spider).